The chain runs to 50 residues: Cytochrome c oxidase subunit 4 (50 aa).

Topologically, residues 2 to 17 (ASHHEITDHKHGEMDI) are cytoplasmic. A helical membrane pass occupies residues 18–49 (RHQQATFAGFIKGATWVSILSIAVLVFLALAN). Position 50 (S50) is a topological domain, periplasmic.

It localises to the cell inner membrane. The catalysed reaction is 4 Fe(II)-[cytochrome c] + O2 + 8 H(+)(in) = 4 Fe(III)-[cytochrome c] + 2 H2O + 4 H(+)(out). In terms of biological role, not required for enzymatic activity or proton pumping of the cytochrome c oxidase complex. This chain is Cytochrome c oxidase subunit 4 (ctaH), found in Paracoccus denitrificans.